The primary structure comprises 963 residues: Transcription factor cbf12 (963 aa).

Disordered stretches follow at residues Asn130–Leu207 and Val248–Lys289. Composition is skewed to polar residues over residues Phe143–Leu207 and Asn249–Lys289.

It belongs to the Su(H) family.

It localises to the nucleus. In terms of biological role, transcription factor which function may be to trigger the increase of adhesion at stationary phase, possibly by counteracting or replacing cbf11 at the respective promoters. May also play a cbf11-antagonistic role in the regulation of a number of other important processes such as extracellular material production, colony morphogenesis, ploidy maintenance, or meiosis. The protein is Transcription factor cbf12 (cbf12) of Schizosaccharomyces pombe (strain 972 / ATCC 24843) (Fission yeast).